We begin with the raw amino-acid sequence, 124 residues long: Small ribosomal subunit protein uS12 (124 aa).

Asp-89 is modified (3-methylthioaspartic acid).

The protein belongs to the universal ribosomal protein uS12 family. Part of the 30S ribosomal subunit. Contacts proteins S8 and S17. May interact with IF1 in the 30S initiation complex.

In terms of biological role, with S4 and S5 plays an important role in translational accuracy. Functionally, interacts with and stabilizes bases of the 16S rRNA that are involved in tRNA selection in the A site and with the mRNA backbone. Located at the interface of the 30S and 50S subunits, it traverses the body of the 30S subunit contacting proteins on the other side and probably holding the rRNA structure together. The combined cluster of proteins S8, S12 and S17 appears to hold together the shoulder and platform of the 30S subunit. This chain is Small ribosomal subunit protein uS12, found in Acinetobacter baumannii (strain AB307-0294).